The following is a 247-amino-acid chain: Nodulation protein H (247 aa).

Positions 1-16 are hydrophobic; sequence MTHSTLPPRPFAILAM.

Functionally, required for the formation of sulfated nod factor. Proposed to transfer activated sulfate (PAPS) to a N-acetylglucosamine of the nod factor. The sequence is that of Nodulation protein H (nodH) from Rhizobium meliloti (Ensifer meliloti).